The chain runs to 347 residues: GMP reductase (347 aa).

An NADP(+)-binding site is contributed by 108–131 (ADFEKTQQILSQNPQLNFVCIDVA). Residues glycine 181 and glycine 183 each contribute to the K(+) site. Cysteine 186 acts as the Thioimidate intermediate in catalysis. 216–239 (IISDGGCTMPGDVAKAFGGGADFV) contributes to the NADP(+) binding site.

Belongs to the IMPDH/GMPR family. GuaC type 1 subfamily. Homotetramer.

The catalysed reaction is IMP + NH4(+) + NADP(+) = GMP + NADPH + 2 H(+). In terms of biological role, catalyzes the irreversible NADPH-dependent deamination of GMP to IMP. It functions in the conversion of nucleobase, nucleoside and nucleotide derivatives of G to A nucleotides, and in maintaining the intracellular balance of A and G nucleotides. This chain is GMP reductase, found in Klebsiella pneumoniae subsp. pneumoniae (strain ATCC 700721 / MGH 78578).